Reading from the N-terminus, the 170-residue chain is dCTP pyrophosphatase 1 (170 aa).

Residues 1–25 form a disordered region; that stretch reads MSQAGTGVCGNGGQEDSAAAGPFSF. Ser-2 carries the post-translational modification N-acetylserine. Ser-2 carries the phosphoserine modification. Substrate contacts are provided by residues His-38 and 47–51; that span reads WEQFH. 2 residues coordinate Mg(2+): Glu-63 and Glu-66. Trp-73 serves as a coordination point for substrate. Mg(2+) is bound by residues Glu-95 and Asp-98. Tyr-102 contacts substrate. Positions 149-170 are disordered; sequence LSENEAVGSGDPASELGNQAST.

As to quaternary structure, homotetramer. The cofactor is Mg(2+).

Its subcellular location is the cytoplasm. It is found in the cytosol. It carries out the reaction dCTP + H2O = dCMP + diphosphate + H(+). Hydrolyzes deoxynucleoside triphosphates (dNTPs) to the corresponding nucleoside monophosphates. Has a strong preference for dCTP and its analogs including 5-iodo-dCTP and 5-methyl-dCTP for which it may even have a higher efficiency. May protect DNA or RNA against the incorporation of these genotoxic nucleotide analogs through their catabolism. The sequence is that of dCTP pyrophosphatase 1 from Rattus norvegicus (Rat).